The chain runs to 624 residues: uncharacterized protein (624 aa).

The N-terminal stretch at 1 to 29 is a signal peptide; the sequence is MRFHRQGTAATVGVLLIVLLGFCWKLSES. Residues asparagine 68, asparagine 150, asparagine 219, asparagine 366, asparagine 441, asparagine 447, asparagine 464, and asparagine 528 are each glycosylated (N-linked (GlcNAc...) asparagine). The interval 141-174 is disordered; it reads LERRHGRFGNGTHGDHPKGPPPPPPPDEKDRGSQ.

It localises to the secreted. This is an uncharacterized protein from Saccharomyces cerevisiae (strain ATCC 204508 / S288c) (Baker's yeast).